The following is a 309-amino-acid chain: Vacuolar membrane protein YOR292C (309 aa).

Over 1–52 (MPLQLFGRDQIVVHYDNGNMSNDDQNHQSVLGSWTRRAAAALRTLMNKRIQR) the chain is Vacuolar. N-linked (GlcNAc...) asparagine glycosylation is present at Asn-19. A helical transmembrane segment spans residues 53 to 73 (ITLTHWLLLVIWVTSLWKFTS). Over 74 to 81 (HYRQLYAN) the chain is Cytoplasmic. The chain crosses the membrane as a helical span at residues 82 to 102 (SAVFATLCTNILLFGISDILA). Residues 103-183 (QSIACFYSYH…KTDTFDFFRW (81 aa)) are Vacuolar-facing. Asn-121 is a glycosylation site (N-linked (GlcNAc...) asparagine). The chain crosses the membrane as a helical span at residues 184–204 (GCFMFWGFFISFFQAPWYKFL). The Cytoplasmic portion of the chain corresponds to 205–225 (NFFYTEDPTVVQVFERVLSDQ). A helical transmembrane segment spans residues 226-246 (LLYSPISLYCFFMFSNYVMEG). Over 247 to 260 (GDKDTLGKKIQRLY) the chain is Vacuolar. A helical transmembrane segment spans residues 261 to 281 (ISTLGCNYLVWPMVQFINFLI). Residues 282–309 (MPRDFQAPFSSSVGVVWNCFLSMRNASK) are Cytoplasmic-facing.

Belongs to the peroxisomal membrane protein PXMP2/4 family. N-glycosylated.

Its subcellular location is the vacuole membrane. In Saccharomyces cerevisiae (strain ATCC 204508 / S288c) (Baker's yeast), this protein is Vacuolar membrane protein YOR292C.